The sequence spans 216 residues: MQLPFPLAEEPDAAAMETGRKLFAGQSEFLKGVVAMSGLPPADRIEVCFAGRSNVGKSSLINALTGTKGLARASNTPGRTQEINFFTQGPELYLVDLPGYGYANAPLAVVEKWQRLLKQYLSGRQTLRRAFVLIDTRHGVKKVDEEIMKLLDTSAVTFQVVMTKADKVKEKDRAKILDQVRDALSKHPAAYPEIVLTSSEKGDGIATLRSIIAHLD.

The region spanning Asp-43–Asp-216 is the EngB-type G domain. GTP-binding positions include Gly-51–Ser-58, Gly-78–Glu-82, Asp-96–Gly-99, Thr-163–Asp-166, and Thr-197–Ser-199. Residues Ser-58 and Thr-80 each coordinate Mg(2+).

It belongs to the TRAFAC class TrmE-Era-EngA-EngB-Septin-like GTPase superfamily. EngB GTPase family. Mg(2+) serves as cofactor.

Functionally, necessary for normal cell division and for the maintenance of normal septation. The protein is Probable GTP-binding protein EngB of Ruegeria sp. (strain TM1040) (Silicibacter sp.).